Here is a 297-residue protein sequence, read N- to C-terminus: uncharacterized protein (297 aa).

The stretch at 128–156 (RGVIVEQESEAAAEKDELESLAKVLESDF) forms a coiled coil.

This is an uncharacterized protein from Bacillus subtilis (strain 168).